The primary structure comprises 237 residues: Bax inhibitor 1 (237 aa).

Residues Met1–Lys29 lie on the Cytoplasmic side of the membrane. Lys7 is covalently cross-linked (Glycyl lysine isopeptide (Lys-Gly) (interchain with G-Cter in ubiquitin)). The chain crosses the membrane as a helical span at residues Val30–Val50. Over Thr51–His52 the chain is Lumenal. The chain crosses the membrane as a helical span at residues Phe53 to Ala73. Topologically, residues Thr74 to Gly86 are cytoplasmic. The chain crosses the membrane as a helical span at residues Leu87–Ile107. The Lumenal portion of the chain corresponds to Ala108–Ser112. Residues Ile113–Leu133 form a helical membrane-spanning segment. The Cytoplasmic portion of the chain corresponds to Tyr134 to Ser139. Residues Tyr140 to Gly160 traverse the membrane as a helical segment. The Lumenal portion of the chain corresponds to Asn161 to Ser166. The helical transmembrane segment at Ile167–Phe187 threads the bilayer. Residues Asp188–His206 lie on the Cytoplasmic side of the membrane. An intramembrane region (helical) is located at residues Cys207 to Phe227. At Asn228–Lys237 the chain is on the cytoplasmic side.

Belongs to the BI1 family. Interacts with BCL2. Interacts with BCL2L1. Interacts with ERN1. Post-translationally, ubiquitinated by BFAR, leading to proteasomal degradation. As to expression, highly abundant in adult testis.

It localises to the endoplasmic reticulum membrane. In terms of biological role, endoplasmic reticulum (ER)-resident protein that confers cellular protection as an anti-apoptotic protein by limiting multiple stress-inducing pathways surrounding the endoplasmic reticulum and mitochondria. Inhibits the activities of the key sensor for the endoplasmic reticulum unfolded protein response IRE1alpha/ERN1 both directly and by blocking BAX/BAK binding. Modulates ER calcium homeostasis by acting as a calcium-leak channel. Negatively regulates autophagy and autophagosome formation, especially during periods of nutrient deprivation, and reduces cell survival during starvation. The protein is Bax inhibitor 1 (Tmbim6) of Mus musculus (Mouse).